The sequence spans 383 residues: uncharacterized protein (383 aa).

Disordered stretches follow at residues 1–30 (MDLC…PTCT), 114–144 (ETKP…STAS), 262–289 (GEKR…ARTS), and 341–360 (AKDP…NSPQ). A compositionally biased stretch (acidic residues) spans 10-26 (DLENGENNEIQSTEETE). The segment covering 128-141 (SSPSQTQAAPQGPS) has biased composition (low complexity). A compositionally biased stretch (basic and acidic residues) spans 262-271 (GEKRPSELAK).

This is an uncharacterized protein from Macaca fascicularis (Crab-eating macaque).